Here is a 352-residue protein sequence, read N- to C-terminus: Histidinol-phosphate aminotransferase (352 aa).

Lys211 is modified (N6-(pyridoxal phosphate)lysine).

Belongs to the class-II pyridoxal-phosphate-dependent aminotransferase family. Histidinol-phosphate aminotransferase subfamily. In terms of assembly, homodimer. Pyridoxal 5'-phosphate serves as cofactor.

The enzyme catalyses L-histidinol phosphate + 2-oxoglutarate = 3-(imidazol-4-yl)-2-oxopropyl phosphate + L-glutamate. It functions in the pathway amino-acid biosynthesis; L-histidine biosynthesis; L-histidine from 5-phospho-alpha-D-ribose 1-diphosphate: step 7/9. This Haemophilus influenzae (strain PittEE) protein is Histidinol-phosphate aminotransferase.